Here is a 532-residue protein sequence, read N- to C-terminus: Muscarinic acetylcholine receptor M5 (532 aa).

Residues 1–29 (MEGDSYGNATTINGTPVNHQPLERHRLWE) lie on the Extracellular side of the membrane. Asn8 is a glycosylation site (N-linked (GlcNAc...) asparagine). The helical transmembrane segment at 30 to 53 (VITIAAVTAVVSLITIVGNVLVMI) threads the bilayer. Residues 54–66 (SFKVNSQLKTVNN) lie on the Cytoplasmic side of the membrane. The helical transmembrane segment at 67-87 (YYLLSLACADLIIGIFSMNLY) threads the bilayer. Residues 88–104 (TTYILMGRWALGSLACD) are Extracellular-facing. Residues 105–126 (LWLALDYVASNASVMNLLVISF) traverse the membrane as a helical segment. The Cytoplasmic portion of the chain corresponds to 127-146 (DRYFSITRPLTYRAKRTPKR). Residues 147-169 (AGIMIGLAWLISFILWAPAILCW) traverse the membrane as a helical segment. Topologically, residues 170–191 (QYLVGKRTVPPDECQIQFLSEP) are extracellular. Residues 192–214 (TITFGTAIAAFYIPVSVMTILYC) traverse the membrane as a helical segment. Topologically, residues 215–443 (RIYRETEKRT…LVKERKAAQT (229 aa)) are cytoplasmic. Residues 263-294 (QRERNQASRSSSHRSTSITGKPSQATGPSTNW) form a disordered region. Residues 270–279 (SRSSSHRSTS) show a composition bias toward low complexity. A compositionally biased stretch (polar residues) spans 280 to 294 (ITGKPSQATGPSTNW). The chain crosses the membrane as a helical span at residues 444–464 (LSAILLAFIITWTPYNIMVLV). The Extracellular segment spans residues 465 to 478 (STFCDKCVPVALWH). Residues 479–498 (LGYWLCYVNSTVNPICYALC) form a helical membrane-spanning segment. The Cytoplasmic portion of the chain corresponds to 499-532 (NRTFRKTFKMLLLCQWKKKKVEEKLYWQGNSKLP). A phosphothreonine mark is found at Thr501 and Thr505.

The protein belongs to the G-protein coupled receptor 1 family. Muscarinic acetylcholine receptor subfamily. CHRM5 sub-subfamily.

The protein resides in the cell membrane. It is found in the postsynaptic cell membrane. Functionally, the muscarinic acetylcholine receptor mediates various cellular responses, including inhibition of adenylate cyclase, breakdown of phosphoinositides and modulation of potassium channels through the action of G proteins. Primary transducing effect is Pi turnover. In Saimiri boliviensis boliviensis (Bolivian squirrel monkey), this protein is Muscarinic acetylcholine receptor M5 (CHRM5).